Reading from the N-terminus, the 300-residue chain is Sulfate adenylyltransferase subunit 2 (300 aa).

The protein belongs to the PAPS reductase family. CysD subfamily. In terms of assembly, heterodimer composed of CysD, the smaller subunit, and CysN.

The catalysed reaction is sulfate + ATP + H(+) = adenosine 5'-phosphosulfate + diphosphate. Its pathway is sulfur metabolism; hydrogen sulfide biosynthesis; sulfite from sulfate: step 1/3. In terms of biological role, with CysN forms the ATP sulfurylase (ATPS) that catalyzes the adenylation of sulfate producing adenosine 5'-phosphosulfate (APS) and diphosphate, the first enzymatic step in sulfur assimilation pathway. APS synthesis involves the formation of a high-energy phosphoric-sulfuric acid anhydride bond driven by GTP hydrolysis by CysN coupled to ATP hydrolysis by CysD. This Magnetococcus marinus (strain ATCC BAA-1437 / JCM 17883 / MC-1) protein is Sulfate adenylyltransferase subunit 2.